A 144-amino-acid polypeptide reads, in one-letter code: Grifin (144 aa).

The Galectin domain maps to phenylalanine 5–alanine 133. Serine 138 bears the Phosphoserine mark.

Homodimer. In terms of tissue distribution, lens-specific. Located at the interface between lens fiber cells (at protein level).

The protein is Grifin (Grifin) of Rattus norvegicus (Rat).